Consider the following 348-residue polypeptide: Probable malate dehydrogenase 2, mitochondrial (348 aa).

A mitochondrion-targeting transit peptide spans 1–9; the sequence is MNKILTRSF. Residue 31-37 coordinates NAD(+); it reads GASGQIG. Residues Arg-112 and Arg-118 each contribute to the substrate site. NAD(+) contacts are provided by residues Asn-125, Gln-132, and 150-152; that span reads VGN. Residues Asn-152 and Arg-183 each contribute to the substrate site. The active-site Proton acceptor is the His-208.

It belongs to the LDH/MDH superfamily. MDH type 2 family. As to quaternary structure, homodimer.

It is found in the mitochondrion. The enzyme catalyses (S)-malate + NAD(+) = oxaloacetate + NADH + H(+). Catalyzes the reversible oxidation of malate to oxaloacetate. The sequence is that of Probable malate dehydrogenase 2, mitochondrial (mdhB) from Dictyostelium discoideum (Social amoeba).